The sequence spans 320 residues: MAQTIKRGGKGVRRATAARSAQRKVQTARQQTGSVLDSVLRWLPFSEETLHRILMTLILAAAAGLVWTVAVMAGIPALVSEQAAIIASDAGFKVSHLEVRGVNRMNEAKIYERILGQNDRAMTTLDLAALRDELNQLPWVKDARVSRKLPDTLVIDIVERTPHAVLRKPDRMVLIDDTGVELESVRADRAKGMLVLSGMGVGQRVEDLTRLLDAAPALKPQVSEAEWVGNRRWNLTFKTGQVLALPEGDETAASALLSFARMDGVNRLLGGKVAAFDMRAPDRIYMRVPGHADEVAAEKRAEEQARAEAKRAASAKSDEG.

Residues 1 to 24 (MAQTIKRGGKGVRRATAARSAQRK) are disordered. The Cytoplasmic portion of the chain corresponds to 1-52 (MAQTIKRGGKGVRRATAARSAQRKVQTARQQTGSVLDSVLRWLPFSEETLHR). The helical transmembrane segment at 53–73 (ILMTLILAAAAGLVWTVAVMA) threads the bilayer. At 74–320 (GIPALVSEQA…RAASAKSDEG (247 aa)) the chain is on the periplasmic side. The 69-residue stretch at 92 to 160 (FKVSHLEVRG…DTLVIDIVER (69 aa)) folds into the POTRA domain. Positions 296-320 (AAEKRAEEQARAEAKRAASAKSDEG) are disordered.

The protein belongs to the FtsQ/DivIB family. FtsQ subfamily.

Its subcellular location is the cell inner membrane. Its function is as follows. Essential cell division protein. The sequence is that of Cell division protein FtsQ from Novosphingobium aromaticivorans (strain ATCC 700278 / DSM 12444 / CCUG 56034 / CIP 105152 / NBRC 16084 / F199).